The chain runs to 394 residues: Elongation factor Tu 1 (394 aa).

The region spanning 10-204 is the tr-type G domain; the sequence is KPHVNVGTIG…ALDSYIPQPE (195 aa). The G1 stretch occupies residues 19-26; it reads GHVDHGKT. 19–26 serves as a coordination point for GTP; it reads GHVDHGKT. Threonine 26 is a Mg(2+) binding site. The tract at residues 60 to 64 is G2; the sequence is GITIN. The interval 81-84 is G3; that stretch reads DCPG. GTP contacts are provided by residues 81–85 and 136–139; these read DCPGH and NKCD. Residues 136-139 are G4; sequence NKCD. The G5 stretch occupies residues 174–176; the sequence is SAL.

Belongs to the TRAFAC class translation factor GTPase superfamily. Classic translation factor GTPase family. EF-Tu/EF-1A subfamily. As to quaternary structure, monomer.

The protein resides in the cytoplasm. It catalyses the reaction GTP + H2O = GDP + phosphate + H(+). In terms of biological role, GTP hydrolase that promotes the GTP-dependent binding of aminoacyl-tRNA to the A-site of ribosomes during protein biosynthesis. The polypeptide is Elongation factor Tu 1 (Yersinia pestis bv. Antiqua (strain Nepal516)).